We begin with the raw amino-acid sequence, 97 residues long: Aspartyl/glutamyl-tRNA(Asn/Gln) amidotransferase subunit C (97 aa).

The protein belongs to the GatC family. As to quaternary structure, heterotrimer of A, B and C subunits.

It carries out the reaction L-glutamyl-tRNA(Gln) + L-glutamine + ATP + H2O = L-glutaminyl-tRNA(Gln) + L-glutamate + ADP + phosphate + H(+). The enzyme catalyses L-aspartyl-tRNA(Asn) + L-glutamine + ATP + H2O = L-asparaginyl-tRNA(Asn) + L-glutamate + ADP + phosphate + 2 H(+). Functionally, allows the formation of correctly charged Asn-tRNA(Asn) or Gln-tRNA(Gln) through the transamidation of misacylated Asp-tRNA(Asn) or Glu-tRNA(Gln) in organisms which lack either or both of asparaginyl-tRNA or glutaminyl-tRNA synthetases. The reaction takes place in the presence of glutamine and ATP through an activated phospho-Asp-tRNA(Asn) or phospho-Glu-tRNA(Gln). This Roseiflexus sp. (strain RS-1) protein is Aspartyl/glutamyl-tRNA(Asn/Gln) amidotransferase subunit C.